Consider the following 203-residue polypeptide: Secreted phosphoprotein 24 (203 aa).

An N-terminal signal peptide occupies residues 1–23 (MEKMAMKMLVIFVLGMNHWTCTG). Cystine bridges form between C86/C97 and C110/C128. A Phosphoserine modification is found at S90. Phosphoserine occurs at positions 138, 139, 166, and 175.

It belongs to the SPP2 family. Multiply phosphorylated at serine residues in Ser-X-Glu/Ser(P) sequences, a recognition motif for phosphorylation by secretory pathway protein kinase. In terms of processing, phosphorylation sites are present in the extracellular medium. As to expression, in liver and bone but not in heart, lung, kidney, or spleen.

The protein localises to the secreted. Functionally, could coordinate an aspect of bone turnover. This Bos taurus (Bovine) protein is Secreted phosphoprotein 24 (SPP2).